The primary structure comprises 298 residues: MQDFSSLLLKLQEYWKNQGCLVIQPYDIPAGAGTFHPATLLRSLDKKPWNVAYVAPSRRPTDGRYGENPNRLGSYYQFQVVIKPSPSNIQELYLKSLEVLGINLNEHDIRFVEDNWESPTLGAWGLGWEVWLDGMEVTQFTYFQQVGGIACSPIPVEITYGLERLAMYVQKVENILEIEWAKKDNDSVRYMQVHLESEYEFSKYHFEAASVKRLLEMFKNAQAEALHCLENKLPLPAYDFVMLCSHFFNILDARKAISVAERQNYILQIRDLAKGCALLYKEQEEEREERLKNALTKA.

This sequence belongs to the class-II aminoacyl-tRNA synthetase family. Tetramer of two alpha and two beta subunits.

Its subcellular location is the cytoplasm. It carries out the reaction tRNA(Gly) + glycine + ATP = glycyl-tRNA(Gly) + AMP + diphosphate. In Helicobacter pylori (strain P12), this protein is Glycine--tRNA ligase alpha subunit.